The chain runs to 474 residues: Serine/threonine-protein kinase VRK3 (474 aa).

Residues 41–58 (HVSSFQGSKRGLNSSFET) show a composition bias toward polar residues. Positions 41-152 (HVSSFQGSKR…SRVTTSLEAL (112 aa)) are disordered. Positions 49-64 (KRGLNSSFETSPKKVK) match the Nuclear localization signal motif. Phosphoserine is present on residues Ser54, Ser55, Ser59, Ser82, Ser83, and Ser90. Over residues 88 to 101 (TLSSSERSKGSGSR) the composition is skewed to low complexity. Over residues 107–149 (SSPQKTRKSPQVTRGSPQKTSCSPQKTRQSPQTLKRSRVTTSL) the composition is skewed to polar residues. Ser108 is modified (phosphoserine; by CDK5). Phosphoserine is present on residues Ser115 and Ser122. Positions 166–457 (WKLKSFQTRD…MLRNNLEALL (292 aa)) constitute a Protein kinase domain.

It belongs to the protein kinase superfamily. CK1 Ser/Thr protein kinase family. VRK subfamily. As to quaternary structure, interacts with DUSP3. Interacts with RAN. Interacts with HSP70/HSPA1A. Phosphorylated at Ser-108 by CDK5; leading to protection of the cell against H2O2-induced apoptosis. In terms of processing, ubiquitinated by RNF144A.

It localises to the nucleus. It is found in the cytoplasm. It catalyses the reaction L-seryl-[protein] + ATP = O-phospho-L-seryl-[protein] + ADP + H(+). Plays a role in the regulation of the cell cycle by phosphorylating the nuclear envelope protein barrier-to-autointegration factor/BAF that is required for disassembly and reassembly, respectively, of the nuclear envelope during mitosis. Under normal physiological conditions, negatively regulates ERK activity along with VHR/DUSP3 phosphatase in the nucleus, causing timely and transient action of ERK. Stress conditions activate CDK5 which phosphorylates VRK3 to increase VHR phosphatase activity and suppress prolonged ERK activation that causes cell death. For example, upon glutamate induction, promotes nuclear localization of HSP70/HSPA1A to inhibit ERK activation via VHR/DUSP3 phosphatase. The sequence is that of Serine/threonine-protein kinase VRK3 (VRK3) from Homo sapiens (Human).